We begin with the raw amino-acid sequence, 469 residues long: 3-isopropylmalate dehydratase large subunit (469 aa).

Positions 350, 410, and 413 each coordinate [4Fe-4S] cluster.

This sequence belongs to the aconitase/IPM isomerase family. LeuC type 1 subfamily. In terms of assembly, heterodimer of LeuC and LeuD. The cofactor is [4Fe-4S] cluster.

It carries out the reaction (2R,3S)-3-isopropylmalate = (2S)-2-isopropylmalate. The protein operates within amino-acid biosynthesis; L-leucine biosynthesis; L-leucine from 3-methyl-2-oxobutanoate: step 2/4. Functionally, catalyzes the isomerization between 2-isopropylmalate and 3-isopropylmalate, via the formation of 2-isopropylmaleate. The polypeptide is 3-isopropylmalate dehydratase large subunit (Allorhizobium ampelinum (strain ATCC BAA-846 / DSM 112012 / S4) (Agrobacterium vitis (strain S4))).